A 447-amino-acid chain; its full sequence is Transcription factor azf1 (447 aa).

Disordered stretches follow at residues 125–155 (HNGA…NEVE) and 174–199 (QSPG…PQSY). Low complexity predominate over residues 127-139 (GASQQPPGAQSSS). A compositionally biased stretch (polar residues) spans 140–155 (NEEGAQGKSSSSNEVE). 4 C2H2-type zinc fingers span residues 225–249 (YACT…MRAH), 255–279 (FVCK…QRRH), 285–307 (FSCD…KITH), and 313–338 (FTCL…NKFH). The segment at 377–447 (NKGIKGRGKD…EPYFIERQAH (71 aa)) is disordered. Residues 397-416 (PGSESRRRIEPLSSTDDKMR) show a composition bias toward basic and acidic residues. Positions 421–431 (GDTSMYNGGSS) are enriched in polar residues.

Its subcellular location is the nucleus. Its function is as follows. Transcription factor that acts as a positive regulator of ochratoxin A (OTA) biosynthesis via controlling the expression of antioxidant genes and oxidative phosphorylation genes. The protein is Transcription factor azf1 of Aspergillus niger (strain ATCC MYA-4892 / CBS 513.88 / FGSC A1513).